We begin with the raw amino-acid sequence, 512 residues long: Cytoplasmic tRNA 2-thiolation protein 2-B (512 aa).

The interval 196–215 is disordered; it reads VTDSDSPGSSDKMYQSTCSR. Over residues 199–214 the composition is skewed to polar residues; sequence SDSPGSSDKMYQSTCS.

It belongs to the CTU2/NCS2 family.

It is found in the cytoplasm. Its pathway is tRNA modification; 5-methoxycarbonylmethyl-2-thiouridine-tRNA biosynthesis. Its function is as follows. Plays a central role in 2-thiolation of mcm(5)S(2)U at tRNA wobble positions of tRNA(Lys), tRNA(Glu) and tRNA(Gln). May act by forming a heterodimer with ctu1/atpbd3 that ligates sulfur from thiocarboxylated urm1 onto the uridine of tRNAs at wobble position. This chain is Cytoplasmic tRNA 2-thiolation protein 2-B (ctu2-b), found in Xenopus laevis (African clawed frog).